The primary structure comprises 295 residues: Bifunctional protein FolD (295 aa).

NADP(+)-binding positions include 166–168 (GRS), Ser195, and Ile236.

It belongs to the tetrahydrofolate dehydrogenase/cyclohydrolase family. In terms of assembly, homodimer.

The catalysed reaction is (6R)-5,10-methylene-5,6,7,8-tetrahydrofolate + NADP(+) = (6R)-5,10-methenyltetrahydrofolate + NADPH. It catalyses the reaction (6R)-5,10-methenyltetrahydrofolate + H2O = (6R)-10-formyltetrahydrofolate + H(+). It functions in the pathway one-carbon metabolism; tetrahydrofolate interconversion. Functionally, catalyzes the oxidation of 5,10-methylenetetrahydrofolate to 5,10-methenyltetrahydrofolate and then the hydrolysis of 5,10-methenyltetrahydrofolate to 10-formyltetrahydrofolate. This chain is Bifunctional protein FolD, found in Chlorobium phaeobacteroides (strain DSM 266 / SMG 266 / 2430).